The primary structure comprises 156 residues: Small ribosomal subunit protein uS7 (156 aa).

This sequence belongs to the universal ribosomal protein uS7 family. As to quaternary structure, part of the 30S ribosomal subunit. Contacts proteins S9 and S11.

Functionally, one of the primary rRNA binding proteins, it binds directly to 16S rRNA where it nucleates assembly of the head domain of the 30S subunit. Is located at the subunit interface close to the decoding center, probably blocks exit of the E-site tRNA. The chain is Small ribosomal subunit protein uS7 from Acidobacterium capsulatum (strain ATCC 51196 / DSM 11244 / BCRC 80197 / JCM 7670 / NBRC 15755 / NCIMB 13165 / 161).